The primary structure comprises 270 residues: Putative carbamate hydrolase RutD (270 aa).

The protein belongs to the AB hydrolase superfamily. Hydrolase RutD family.

It catalyses the reaction carbamate + 2 H(+) = NH4(+) + CO2. Its function is as follows. Involved in pyrimidine catabolism. May facilitate the hydrolysis of carbamate, a reaction that can also occur spontaneously. The protein is Putative carbamate hydrolase RutD of Escherichia coli O44:H18 (strain 042 / EAEC).